A 661-amino-acid chain; its full sequence is UvrABC system protein B (661 aa).

Positions 28-414 (DGVNERKRHQ…HTDEMVEQII (387 aa)) constitute a Helicase ATP-binding domain. Position 41-48 (41-48 (GATGTGKT)) interacts with ATP. The Beta-hairpin signature appears at 94–117 (YYDYYQPEAYVPSTDTFIEKDASI). Residues 432–598 (QIDDLLSEIQ…TINKKIHDVI (167 aa)) enclose the Helicase C-terminal domain. Positions 603–624 (ESDETNQQQQTELPKKMTKKER) are disordered. The UVR domain maps to 625-660 (QKTIENIEKEMKKAAKDLDFEKATELRDMLFELKAE).

This sequence belongs to the UvrB family. Forms a heterotetramer with UvrA during the search for lesions. Interacts with UvrC in an incision complex.

It is found in the cytoplasm. Its function is as follows. The UvrABC repair system catalyzes the recognition and processing of DNA lesions. A damage recognition complex composed of 2 UvrA and 2 UvrB subunits scans DNA for abnormalities. Upon binding of the UvrA(2)B(2) complex to a putative damaged site, the DNA wraps around one UvrB monomer. DNA wrap is dependent on ATP binding by UvrB and probably causes local melting of the DNA helix, facilitating insertion of UvrB beta-hairpin between the DNA strands. Then UvrB probes one DNA strand for the presence of a lesion. If a lesion is found the UvrA subunits dissociate and the UvrB-DNA preincision complex is formed. This complex is subsequently bound by UvrC and the second UvrB is released. If no lesion is found, the DNA wraps around the other UvrB subunit that will check the other stand for damage. The sequence is that of UvrABC system protein B from Staphylococcus epidermidis (strain ATCC 12228 / FDA PCI 1200).